The primary structure comprises 344 residues: Fructose-1,6-bisphosphatase, cytosolic (344 aa).

Mg(2+) contacts are provided by E71, E100, D121, L123, and D124. Substrate is bound by residues 124 to 127 (DGSS), N215, Y247, Y267, and K277. E283 is a binding site for Mg(2+).

It belongs to the FBPase class 1 family. It depends on Mg(2+) as a cofactor.

It localises to the cytoplasm. It catalyses the reaction beta-D-fructose 1,6-bisphosphate + H2O = beta-D-fructose 6-phosphate + phosphate. This Oryza coarctata (Wild rice) protein is Fructose-1,6-bisphosphatase, cytosolic.